A 452-amino-acid chain; its full sequence is MKSLLRQIPQISKVVEIFKKKYPEIYVVKAAREVAEKYRKEIIEGKRKDLNGFLEDVERKIKSLMKPNIKRVINATGVVINTNLGRAPLSKDVINFISEIANGYSNLEYNLEEGKRGSRIAHIEKYLNELTGAESSFVVNNNAGAVFLVLNTLAEGKEVIISRGELVEIGGSFRIPDIMKKSGAILREVGTTNKTKVSDYEGAINQNTALLMKVHKSNFYMEGFVEEVKLEDLVKLGHKYGIPTYYDAGSGLLINLKEFGISVDEPNFRDCISLGIDLVSGSGDKLLGGPQAGIIVGKKNLIEKIKKNPIARALRIDKLTLSGLEMTLKLYFEKRYEDIPVIRMLTQDEKALRQKAKRLEKLLKDIPGLKISVIKDKAKPGGGSLPELELPTYCVAIRHDRLSSQELSRRLRLAEPPIVCRIREDQLLFDMRTVFHEDLKTIKKTLQELLSI.

Lys285 carries the N6-(pyridoxal phosphate)lysine modification.

It belongs to the SelA family. It depends on pyridoxal 5'-phosphate as a cofactor.

It is found in the cytoplasm. The enzyme catalyses L-seryl-tRNA(Sec) + selenophosphate + H(+) = L-selenocysteinyl-tRNA(Sec) + phosphate. The protein operates within aminoacyl-tRNA biosynthesis; selenocysteinyl-tRNA(Sec) biosynthesis; selenocysteinyl-tRNA(Sec) from L-seryl-tRNA(Sec) (bacterial route): step 1/1. Its function is as follows. Converts seryl-tRNA(Sec) to selenocysteinyl-tRNA(Sec) required for selenoprotein biosynthesis. This chain is L-seryl-tRNA(Sec) selenium transferase, found in Aquifex aeolicus (strain VF5).